Consider the following 345-residue polypeptide: MNSNDKKKVVRSWIEQFVHDFVEQLSKPTKDSVNVALKRRKHNSWNGSLDSKANERQKVKVFSFPRNETTIAQLFRVLDCVHEAVISDTVITKRDIYYRDVDLFKRQTVVDELLGDISNTIGCSRSDLNVEASAKGLVFGSIHIALENGTVITATKPLLISHHRISSITSTAKWVLVIEKEAVFQTLTEEALADTIIVTAKGFPDLMTRKFLVKLAKALPDAKFFGIFDWDPHGLCIYSCFKYGSNAYSHEPHSQLRNLQLLGPLYEDIFNKNQEFSLKLNKRDIKMITTLLQFEGFQKEPVVREQLQRMLFIQKKAEIQAILEFPSWIKGKLADADKSGKHSVR.

The region spanning 5 to 137 is the Topo IIA-type catalytic domain; that stretch reads DKKKVVRSWI…LNVEASAKGL (133 aa). Residue Tyr98 is the O-(5'-phospho-DNA)-tyrosine intermediate of the active site. Mg(2+) is bound by residues Glu179 and Asp229.

This sequence belongs to the TOP6A family. Component of the DSB catalytic core (DSBC) complex, composed of at least rec12, rec6 and rec14. The complex interacts with mde2. Mg(2+) serves as cofactor.

The protein resides in the cytoplasm. Its subcellular location is the nucleus. It carries out the reaction ATP-dependent breakage, passage and rejoining of double-stranded DNA.. In terms of biological role, required for formation of the double-strand breaks (DSBs) that initiate meiotic recombination. Required for crossover recombination and chiasmatic segregation of chromosomes during meiosis I. Also involved in the faithful equational segregation of chromosomes during meiosis II. The polypeptide is Meiotic recombination protein rec12 (Schizosaccharomyces pombe (strain 972 / ATCC 24843) (Fission yeast)).